A 208-amino-acid chain; its full sequence is FMN-dependent NADH:quinone oxidoreductase (208 aa).

Residue 99 to 102 (MWNF) coordinates FMN.

It belongs to the azoreductase type 1 family. As to quaternary structure, homodimer. The cofactor is FMN.

It carries out the reaction 2 a quinone + NADH + H(+) = 2 a 1,4-benzosemiquinone + NAD(+). It catalyses the reaction N,N-dimethyl-1,4-phenylenediamine + anthranilate + 2 NAD(+) = 2-(4-dimethylaminophenyl)diazenylbenzoate + 2 NADH + 2 H(+). Quinone reductase that provides resistance to thiol-specific stress caused by electrophilic quinones. Functionally, also exhibits azoreductase activity. Catalyzes the reductive cleavage of the azo bond in aromatic azo compounds to the corresponding amines. The protein is FMN-dependent NADH:quinone oxidoreductase of Brevibacillus brevis (strain 47 / JCM 6285 / NBRC 100599).